A 575-amino-acid chain; its full sequence is Hemagglutinin-neuraminidase (575 aa).

The segment covering 1–10 has biased composition (basic and acidic residues); that stretch reads MDGDRGKRDS. The disordered stretch occupies residues 1–27; sequence MDGDRGKRDSYWSTSPSGSTTKPASGW. At 1–37 the chain is on the intravirion side; it reads MDGDRGKRDSYWSTSPSGSTTKPASGWERSSKADTWL. The incorporation in virion stretch occupies residues 10–14; the sequence is SYWST. Over residues 11–23 the composition is skewed to polar residues; it reads YWSTSPSGSTTKP. Residues 38-58 traverse the membrane as a helical; Signal-anchor for type II membrane protein segment; sequence LILSFTQWALSIATVIICIII. The interval 59–140 is interaction with F protein; it reads SARQGYSMKE…RQELTQHCES (82 aa). Over 59–575 the chain is Virion surface; sequence SARQGYSMKE…SIPKLCKAES (517 aa). N-linked (GlcNAc...) asparagine; by host glycosylation occurs at N77. Disulfide bonds link C192–C216, C258–C271, C357–C469, and C463–C473. Residues 254–259 are involved in neuraminidase activity; the sequence is NRKSCS. Residues N499 and N511 are each glycosylated (N-linked (GlcNAc...) asparagine; by host). An intrachain disulfide couples C535 to C544.

The protein belongs to the paramyxoviruses hemagglutinin-neuraminidase family. As to quaternary structure, homotetramer; composed of disulfide-linked homodimers. Interacts with F protein trimer. Post-translationally, N-glycosylated; glycans consist of a mixture of high mannose-type oligosaccharides and of complex-type oligosaccharides.

It localises to the virion membrane. The protein resides in the host cell membrane. It carries out the reaction Hydrolysis of alpha-(2-&gt;3)-, alpha-(2-&gt;6)-, alpha-(2-&gt;8)- glycosidic linkages of terminal sialic acid residues in oligosaccharides, glycoproteins, glycolipids, colominic acid and synthetic substrates.. In terms of biological role, attaches the virus to sialic acid-containing cell receptors and thereby initiating infection. Binding of HN protein to the receptor induces a conformational change that allows the F protein to trigger virion/cell membranes fusion. Its function is as follows. Neuraminidase activity ensures the efficient spread of the virus by dissociating the mature virions from the neuraminic acid containing glycoproteins. The sequence is that of Hemagglutinin-neuraminidase (HN) from Sendai virus (strain Z) (SeV).